Here is a 344-residue protein sequence, read N- to C-terminus: Selenide, water dikinase (344 aa).

Residue Cys-15 is part of the active site. ATP is bound by residues Lys-18 and 46 to 48; that span reads TKD. Asp-49 serves as a coordination point for Mg(2+). Residues Asp-66, Asp-89, and 137 to 139 each bind ATP; that span reads GHS. Mg(2+) is bound at residue Asp-89. Asp-225 lines the Mg(2+) pocket.

It belongs to the selenophosphate synthase 1 family. Class I subfamily. Homodimer. Requires Mg(2+) as cofactor.

The catalysed reaction is hydrogenselenide + ATP + H2O = selenophosphate + AMP + phosphate + 2 H(+). In terms of biological role, synthesizes selenophosphate from selenide and ATP. The chain is Selenide, water dikinase from Colwellia psychrerythraea (strain 34H / ATCC BAA-681) (Vibrio psychroerythus).